The sequence spans 94 residues: Small nuclear ribonucleoprotein E (94 aa).

The Sm domain occupies 14–94 (INCIFNFLQQ…DNITLITSAD (81 aa)).

This sequence belongs to the snRNP Sm proteins family. Component of the Sm core complex, present in spliceosomal snRNP U1, U2, U4/U6 and U5. The core complex contains SMB1, SMD1, SMD2, SMD3, SME1, SMX3 and SMX2 (Sm proteins B, D1, D2, D3, E, F and G, respectively), and is probably a heptameric ring structure. SME1 specifically interacts with SMX2 and SMX3. Component of the U4/U6-U5 tri-snRNP complex composed of the U4, U6 and U5 snRNAs and at least PRP3, PRP4, PRP6, PRP8, PRP18, PRP31, PRP38, SNU13, SNU23, SNU66, SNU114, SPP381, SMB1, SMD1, SMD2, SMD3, SMX2, SMX3, LSM2, LSM3, LSM4, LSM5, LSM6, LSM7, LSM8, BRR2 and DIB1.

Its subcellular location is the cytoplasm. It localises to the nucleus. Involved in pre-mRNA splicing. Binds and is required for the stability of snRNA U1, U2, U4 and U5 which contain a highly conserved structural motif called the Sm binding site. Involved in cap modification. The polypeptide is Small nuclear ribonucleoprotein E (SME1) (Saccharomyces cerevisiae (strain ATCC 204508 / S288c) (Baker's yeast)).